The chain runs to 623 residues: UvrABC system protein C (623 aa).

The region spanning 21-100 (AEPGVYLMRD…IKTHQPPYNV (80 aa)) is the GIY-YIG domain. The region spanning 210–245 (DELIRELQEKMIQAAEQENYEAAARYRDQIRGLEQL) is the UVR domain.

The protein belongs to the UvrC family. In terms of assembly, interacts with UvrB in an incision complex.

Its subcellular location is the cytoplasm. The UvrABC repair system catalyzes the recognition and processing of DNA lesions. UvrC both incises the 5' and 3' sides of the lesion. The N-terminal half is responsible for the 3' incision and the C-terminal half is responsible for the 5' incision. In Synechococcus sp. (strain JA-2-3B'a(2-13)) (Cyanobacteria bacterium Yellowstone B-Prime), this protein is UvrABC system protein C.